Reading from the N-terminus, the 294-residue chain is 33 kDa chaperonin (294 aa).

Cystine bridges form between Cys-239–Cys-241 and Cys-272–Cys-275.

It belongs to the HSP33 family. Under oxidizing conditions two disulfide bonds are formed involving the reactive cysteines. Under reducing conditions zinc is bound to the reactive cysteines and the protein is inactive.

Its subcellular location is the cytoplasm. Its function is as follows. Redox regulated molecular chaperone. Protects both thermally unfolding and oxidatively damaged proteins from irreversible aggregation. Plays an important role in the bacterial defense system toward oxidative stress. The protein is 33 kDa chaperonin of Listeria monocytogenes serovar 1/2a (strain ATCC BAA-679 / EGD-e).